A 444-amino-acid polypeptide reads, in one-letter code: Enolase (444 aa).

2 residues coordinate substrate: His163 and Glu172. Residue Glu215 is the Proton donor of the active site. Mg(2+)-binding residues include Asp250, Glu300, and Asp327. Residues Glu300 and Asp327 each contribute to the substrate site. Lys352 (proton acceptor) is an active-site residue. Substrate-binding positions include 379 to 382 and Lys403; that span reads SHRS.

This sequence belongs to the enolase family. Homodimer. Mg(2+) is required as a cofactor.

The protein localises to the cytoplasm. It catalyses the reaction (2R)-2-phosphoglycerate = phosphoenolpyruvate + H2O. The protein operates within carbohydrate degradation; glycolysis; pyruvate from D-glyceraldehyde 3-phosphate: step 4/5. This Solanum lycopersicum (Tomato) protein is Enolase (PGH1).